Here is a 595-residue protein sequence, read N- to C-terminus: Solute carrier family 13 member 1 (595 aa).

5 helical membrane-spanning segments follow: residues 13–33 (FLFV…LHTK), 41–61 (LFVV…TALL), 77–97 (VASA…CLAT), 108–128 (IALK…LGFM), and 131–151 (TAFL…MPIA). Asparagine 174 and asparagine 207 each carry an N-linked (GlcNAc...) asparagine glycan. A run of 8 helical transmembrane segments spans residues 239 to 259 (LTCL…ITGT), 290 to 310 (PAAL…FLGF), 348 to 368 (IVTL…DPGF), 381 to 401 (GFAT…LIPA), 464 to 484 (PLGS…VTSL), 491 to 511 (PATI…IHVN), 512 to 532 (PLYI…LPVA), and 554 to 574 (GLGV…TWIV). Residue asparagine 591 is glycosylated (N-linked (GlcNAc...) asparagine).

It belongs to the SLC13A/DASS transporter (TC 2.A.47) family. NADC subfamily. In terms of tissue distribution, highly expressed in kidney; not detectable in the other tissues tested.

It localises to the apical cell membrane. The enzyme catalyses sulfate(out) + 3 Na(+)(out) = sulfate(in) + 3 Na(+)(in). It carries out the reaction selenate(out) + 3 Na(+)(out) = selenate(in) + 3 Na(+)(in). The catalysed reaction is thiosulfate(out) + 3 Na(+)(out) = thiosulfate(in) + 3 Na(+)(in). With respect to regulation, inhibited by thiosulfate, selenate, molybdate, tungstate, citrate and succinate. Functionally, sodium:sulfate symporter that mediates sulfate reabsorption in the kidney and small intestine. Can also mediate the transport of selenate and thiosulfate. The protein is Solute carrier family 13 member 1 (SLC13A1) of Homo sapiens (Human).